The chain runs to 385 residues: 1-deoxy-D-xylulose 5-phosphate reductoisomerase (385 aa).

The NADPH site is built by Thr-10, Gly-11, Ile-13, Gly-36, and Asn-38. Lys-123 is a 1-deoxy-D-xylulose 5-phosphate binding site. Glu-124 is an NADPH binding site. Asp-148 provides a ligand contact to Mn(2+). 4 residues coordinate 1-deoxy-D-xylulose 5-phosphate: Ser-149, Glu-150, Ser-172, and His-195. Glu-150 contacts Mn(2+). Residue Gly-201 coordinates NADPH. Ser-208, Asn-213, Lys-214, and Glu-217 together coordinate 1-deoxy-D-xylulose 5-phosphate. Glu-217 is a Mn(2+) binding site.

It belongs to the DXR family. It depends on Mg(2+) as a cofactor. The cofactor is Mn(2+).

It catalyses the reaction 2-C-methyl-D-erythritol 4-phosphate + NADP(+) = 1-deoxy-D-xylulose 5-phosphate + NADPH + H(+). Its pathway is isoprenoid biosynthesis; isopentenyl diphosphate biosynthesis via DXP pathway; isopentenyl diphosphate from 1-deoxy-D-xylulose 5-phosphate: step 1/6. Its function is as follows. Catalyzes the NADPH-dependent rearrangement and reduction of 1-deoxy-D-xylulose-5-phosphate (DXP) to 2-C-methyl-D-erythritol 4-phosphate (MEP). The chain is 1-deoxy-D-xylulose 5-phosphate reductoisomerase from Anaplasma phagocytophilum (strain HZ).